A 251-amino-acid polypeptide reads, in one-letter code: Triosephosphate isomerase (251 aa).

9 to 11 (NWK) lines the substrate pocket. H94 acts as the Electrophile in catalysis. E167 functions as the Proton acceptor in the catalytic mechanism. Residues G173, S213, and 234 to 235 (GG) each bind substrate.

The protein belongs to the triosephosphate isomerase family. As to quaternary structure, homodimer.

It is found in the cytoplasm. It catalyses the reaction D-glyceraldehyde 3-phosphate = dihydroxyacetone phosphate. It participates in carbohydrate biosynthesis; gluconeogenesis. Its pathway is carbohydrate degradation; glycolysis; D-glyceraldehyde 3-phosphate from glycerone phosphate: step 1/1. Functionally, involved in the gluconeogenesis. Catalyzes stereospecifically the conversion of dihydroxyacetone phosphate (DHAP) to D-glyceraldehyde-3-phosphate (G3P). This is Triosephosphate isomerase from Finegoldia magna (strain ATCC 29328 / DSM 20472 / WAL 2508) (Peptostreptococcus magnus).